The following is a 349-amino-acid chain: uncharacterized protein (349 aa).

The first 25 residues, 1-25, serve as a signal peptide directing secretion; sequence MNKYIKQGAPILGILLAVMFGGREG.

Belongs to the bacterial solute-binding protein 1 family. WtpA subfamily.

This is an uncharacterized protein from Methanococcus aeolicus (strain ATCC BAA-1280 / DSM 17508 / OCM 812 / Nankai-3).